A 546-amino-acid polypeptide reads, in one-letter code: 5'-nucleotidase domain-containing protein 3 (546 aa).

Residue Asp-100 is the Nucleophile of the active site. 2 residues coordinate Mg(2+): Asp-100 and Asp-102. Asp-102 serves as the catalytic Proton donor. Residue 249 to 257 (KDSIRDVHI) participates in substrate binding. Asp-387 lines the Mg(2+) pocket.

This sequence belongs to the 5'(3')-deoxyribonucleotidase family. The cofactor is Mg(2+).

This Mus musculus (Mouse) protein is 5'-nucleotidase domain-containing protein 3 (Nt5dc3).